A 61-amino-acid chain; its full sequence is DNA-directed RNA polymerase subunit Rpo10 (61 aa).

Zn(2+)-binding residues include Cys6, Cys9, Cys42, and Cys43.

The protein belongs to the archaeal Rpo10/eukaryotic RPB10 RNA polymerase subunit family. As to quaternary structure, part of the RNA polymerase complex. The cofactor is Zn(2+).

It is found in the cytoplasm. It carries out the reaction RNA(n) + a ribonucleoside 5'-triphosphate = RNA(n+1) + diphosphate. DNA-dependent RNA polymerase (RNAP) catalyzes the transcription of DNA into RNA using the four ribonucleoside triphosphates as substrates. This chain is DNA-directed RNA polymerase subunit Rpo10, found in Methanothrix thermoacetophila (strain DSM 6194 / JCM 14653 / NBRC 101360 / PT) (Methanosaeta thermophila).